Reading from the N-terminus, the 419-residue chain is D-amino acid dehydrogenase (419 aa).

3–17 (VLILGGGVVGVTSAY) is an FAD binding site.

The protein belongs to the DadA oxidoreductase family. FAD serves as cofactor.

It carries out the reaction a D-alpha-amino acid + A + H2O = a 2-oxocarboxylate + AH2 + NH4(+). Its pathway is amino-acid degradation; D-alanine degradation; NH(3) and pyruvate from D-alanine: step 1/1. Its function is as follows. Oxidative deamination of D-amino acids. The polypeptide is D-amino acid dehydrogenase (Methylobacterium radiotolerans (strain ATCC 27329 / DSM 1819 / JCM 2831 / NBRC 15690 / NCIMB 10815 / 0-1)).